We begin with the raw amino-acid sequence, 394 residues long: Ornithine aminotransferase 1 (394 aa).

The residue at position 252 (Lys252) is an N6-(pyridoxal phosphate)lysine.

The protein belongs to the class-III pyridoxal-phosphate-dependent aminotransferase family. OAT subfamily. Pyridoxal 5'-phosphate is required as a cofactor.

The protein resides in the cytoplasm. The catalysed reaction is a 2-oxocarboxylate + L-ornithine = L-glutamate 5-semialdehyde + an L-alpha-amino acid. The protein operates within amino-acid biosynthesis; L-proline biosynthesis; L-glutamate 5-semialdehyde from L-ornithine: step 1/1. Its function is as follows. Catalyzes the interconversion of ornithine to glutamate semialdehyde. In Staphylococcus aureus (strain COL), this protein is Ornithine aminotransferase 1.